A 541-amino-acid chain; its full sequence is Glutamine-dependent NAD(+) synthetase (541 aa).

Positions 4–243 (FKIALAQFSP…EELYYSEFDI (240 aa)) constitute a CN hydrolase domain. The Proton acceptor; for glutaminase activity role is filled by glutamate 44. The active-site For glutaminase activity is the lysine 111. Tyrosine 117 provides a ligand contact to L-glutamine. The Nucleophile; for glutaminase activity role is filled by cysteine 147. Residues serine 173 and lysine 179 each contribute to the L-glutamine site. 286–293 (GLSGGIDS) provides a ligand contact to ATP. Asparagine 369 provides a ligand contact to deamido-NAD(+). Threonine 393 is an ATP binding site. The deamido-NAD(+) site is built by glutamate 398 and lysine 510.

In the C-terminal section; belongs to the NAD synthetase family.

It carries out the reaction deamido-NAD(+) + L-glutamine + ATP + H2O = L-glutamate + AMP + diphosphate + NAD(+) + H(+). Its pathway is cofactor biosynthesis; NAD(+) biosynthesis; NAD(+) from deamido-NAD(+) (L-Gln route): step 1/1. Catalyzes the ATP-dependent amidation of deamido-NAD to form NAD. Uses L-glutamine as a nitrogen source. In vitro, can also use ammonia as donor with comparable specific activity, but cannot use nicotinate mononucleotide (NaMN) as substrate. The sequence is that of Glutamine-dependent NAD(+) synthetase from Acinetobacter baylyi (strain ATCC 33305 / BD413 / ADP1).